Reading from the N-terminus, the 645-residue chain is UPF0313 protein CLM_0251 (645 aa).

The 272-residue stretch at 295–566 (AIKEVKFSIT…RMQRALLQFS (272 aa)) folds into the Radical SAM core domain. Residues C309, C313, and C316 each contribute to the [4Fe-4S] cluster site. The disordered stretch occupies residues 598 to 645 (NKPYKKSHKKNNAKNNNNHYNKNNNYNKNKDISKKNKKNSLSKHKKRK). Residues 600 to 609 (PYKKSHKKNN) show a composition bias toward basic residues. Over residues 610 to 624 (AKNNNNHYNKNNNYN) the composition is skewed to low complexity. The span at 632–645 (KNKKNSLSKHKKRK) shows a compositional bias: basic residues.

It belongs to the UPF0313 family. It depends on [4Fe-4S] cluster as a cofactor.

This chain is UPF0313 protein CLM_0251, found in Clostridium botulinum (strain Kyoto / Type A2).